The primary structure comprises 419 residues: MSYYGSSYRIVNVDSKYPGYPPEHAIAEKRRARRRLLHKDGSCNVYFKHIFGEWGSYMVDIFTTLVDTKWRHMFVIFSLSYILSWLIFGSIFWLIAFHHGDLLSDPDITPCVDNVHSFTAAFLFSLETQTTIGYGYRCVTEECSVAVLTVILQSILSCIINTFIIGAALAKMATARKRAQTIRFSYFALIGMRDGKLCLMWRIGDFRPNHVVEGTVRAQLLRYSEDSEGRMTMAFKDLKLVNDQIILVTPVTIVHEIDHESPLYALDRKAVAKDNFEILVTFIYTGDSTGTSHQSRSSYIPREILWGHRFHDVLEVKRKYYKVNCLQFEGSVEVYAPFCSAKQLDWKDQQLNNLEKTSPARGSCNSDTNTRRRSFSAVAVVSSCENPEETVLSPQDECKEMPYQKALLTLNRISMESQM.

Residues 1–67 (MSYYGSSYRI…MVDIFTTLVD (67 aa)) lie on the Cytoplasmic side of the membrane. Residues 68 to 94 (TKWRHMFVIFSLSYILSWLIFGSIFWL) form a helical membrane-spanning segment. Residues 95 to 117 (IAFHHGDLLSDPDITPCVDNVHS) lie on the Extracellular side of the membrane. Residues 118-134 (FTAAFLFSLETQTTIGY) constitute an intramembrane region (helical; Pore-forming). Positions 131–136 (TIGYGY) match the Selectivity filter motif. At 135–143 (GYRCVTEEC) the chain is on the extracellular side. The chain crosses the membrane as a helical span at residues 144-171 (SVAVLTVILQSILSCIINTFIIGAALAK). Over 172–419 (MATARKRAQT…LNRISMESQM (248 aa)) the chain is Cytoplasmic. Ser-358, Ser-374, and Ser-376 each carry phosphoserine.

This sequence belongs to the inward rectifier-type potassium channel (TC 1.A.2.1) family. KCNJ16 subfamily. It forms heteromeric channels with Kir4.1/KCNJ10; this interaction is required for KCNJ16 localization to the basolateral membrane in kidney cells. As a heteromer with KCNJ10, may interact with MAGI1; this interaction may facilitate KCNJ10/KCNJ16 potassium channel expression at the basolateral membrane in kidney cells. May form heteromers with Kir2.1/KCNJ2. Can form heteromeric channels with Kir4.2/KCNJ15. Abundantly expressed in the proximal and distal segments of the nephron.

It is found in the membrane. The protein resides in the basolateral cell membrane. The enzyme catalyses K(+)(in) = K(+)(out). With respect to regulation, channel activity is strongly regulated by variations of cytosolic pH; channels are activated by alkaline and inhibited by acidic pH values. Activated by phosphatidylinositol 4,5 biphosphate (PtdIns(4,5)P2). In terms of biological role, inward rectifier potassium channels are characterized by a greater tendency to allow potassium to flow into the cell rather than out of it. Their voltage dependence is regulated by the concentration of extracellular potassium; as external potassium is raised, the voltage range of the channel opening shifts to more positive voltages. The inward rectification is mainly due to the blockage of outward current by internal magnesium. KCNJ16 may be involved in the regulation of fluid and pH balance. In the kidney, together with KCNJ10, mediates basolateral K(+) recycling in distal tubules; this process is critical for Na(+) reabsorption at the tubules. The protein is Inward rectifier potassium channel 16 (Kcnj16) of Mus musculus (Mouse).